Consider the following 354-residue polypeptide: Bacteriochlorophyll a protein (354 aa).

The bacteriochlorophyll a site is built by H99, H134, H278, H285, and H286.

As to quaternary structure, homotrimer. Each subunit contains 7 molecules of bacteriochlorophyll a.

Functionally, intermediary in the transfer of excitation energy from the chlorophyll to the reaction centers. In Chlorobaculum thiosulfatiphilum (Chlorobium limicola f.sp. thiosulfatophilum), this protein is Bacteriochlorophyll a protein (fmoA).